Here is a 530-residue protein sequence, read N- to C-terminus: Cytochrome P450 monooxygenase sttB (530 aa).

N-linked (GlcNAc...) asparagine glycosylation occurs at N5. The chain crosses the membrane as a helical span at residues 24 to 44 (LPILTVALLTGIASAVYINVS). The N-linked (GlcNAc...) asparagine glycan is linked to N230.

Belongs to the cytochrome P450 family. Requires heme as cofactor.

The protein localises to the membrane. It catalyses the reaction preaspterpenacid acid I + reduced [NADPH--hemoprotein reductase] + O2 = preaspterpenacid acid II + oxidized [NADPH--hemoprotein reductase] + H2O + H(+). Its pathway is secondary metabolite biosynthesis; terpenoid biosynthesis. In terms of biological role, cytochrome P450 monooxygenase; part of the gene cluster that mediates the biosynthesis of aspterpenacids. Performs the C22-oxidative modification of the terpene synthase sttA product preaspterpenacid I to produce preaspterpenacid II. It has still to be determined how preaspterpenacid II is further modified to produce aspterpenacids. The chain is Cytochrome P450 monooxygenase sttB from Aspergillus terreus (strain NIH 2624 / FGSC A1156).